Consider the following 351-residue polypeptide: uncharacterized protein (351 aa).

The Mn(2+) site is built by D215, D226, H290, E319, and E333.

The protein belongs to the peptidase M24B family. Requires Mn(2+) as cofactor.

This is an uncharacterized protein from Staphylococcus haemolyticus (strain JCSC1435).